The primary structure comprises 446 residues: Histidine--tRNA ligase (446 aa).

It belongs to the class-II aminoacyl-tRNA synthetase family. Homodimer.

It localises to the cytoplasm. It carries out the reaction tRNA(His) + L-histidine + ATP = L-histidyl-tRNA(His) + AMP + diphosphate + H(+). The polypeptide is Histidine--tRNA ligase (Burkholderia cenocepacia (strain HI2424)).